The sequence spans 257 residues: Small ribosomal subunit protein uS4c (257 aa).

S4 RNA-binding domains are found at residues 110 to 170 (MRLD…QLVN) and 189 to 255 (KTLP…KNYL).

This sequence belongs to the universal ribosomal protein uS4 family. In terms of assembly, part of the 30S ribosomal subunit. Contacts protein S5. The interaction surface between S4 and S5 is involved in control of translational fidelity.

It localises to the plastid. Its subcellular location is the chloroplast. Functionally, one of the primary rRNA binding proteins, it binds directly to 16S rRNA where it nucleates assembly of the body of the 30S subunit. With S5 and S12 plays an important role in translational accuracy. This Chlamydomonas reinhardtii (Chlamydomonas smithii) protein is Small ribosomal subunit protein uS4c (rps4).